The sequence spans 251 residues: Azurocidin (251 aa).

The N-terminal stretch at 1–19 (MTRLTVLALLAGLLASSRA) is a signal peptide. A propeptide spans 20-26 (GSSPLLD) (removed in mature form). The propeptide at 25-26 (LD) is dipeptide found in non-mature form. Residues 27–244 (IVGGRKARPR…FRDWIDGVLN (218 aa)) form the Peptidase S1 domain. A possesses antibiotic activity region spans residues 46 to 70 (NQGRHFCGGALIHARFVMTAASCFQ). An intrachain disulfide couples Cys-52 to Cys-68. An N-linked (GlcNAc...) asparagine; partial glycan is attached at Asn-126. N-linked (GlcNAc...) asparagine glycosylation occurs at Asn-140. Intrachain disulfides connect Cys-149/Cys-207, Cys-180/Cys-186, and Cys-197/Cys-222. The N-linked (GlcNAc...) asparagine; partial glycan is linked to Asn-171. A propeptide spans 249–251 (GPA) (removed in mature form).

It belongs to the peptidase S1 family. Elastase subfamily. Cleavage of the N-terminal propeptide which is composed of 7 amino acids occurs in two steps. The initial cleavage of 5 amino acids is followed by the cleavage of a dipeptide to produce the mature form.

Its subcellular location is the cytoplasmic granule membrane. Its function is as follows. This is a neutrophil granule-derived antibacterial and monocyte- and fibroblast-specific chemotactic glycoprotein. Binds heparin. The cytotoxic action is limited to many species of Gram-negative bacteria; this specificity may be explained by a strong affinity of the very basic N-terminal half for the negatively charged lipopolysaccharides that are unique to the Gram-negative bacterial outer envelope. It may play a role in mediating recruitment of monocytes in the second wave of inflammation. Has antibacterial activity against the Gram-negative bacterium P.aeruginosa, this activity is inhibited by LPS from P.aeruginosa. Acting alone, it does not have antimicrobial activity against the Gram-negative bacteria A.actinomycetemcomitans ATCC 29532, A.actinomycetemcomitans NCTC 9709, A.actinomycetemcomitans FDC-Y4, H.aphrophilus ATCC 13252, E.corrodens ATCC 23834, C.sputigena ATCC 33123, Capnocytophaga sp ATCC 33124, Capnocytophaga sp ATCC 27872 or E.coli ML-35. Has antibacterial activity against C.sputigena ATCC 33123 when acting synergistically with either elastase or cathepsin G. This is Azurocidin from Homo sapiens (Human).